Reading from the N-terminus, the 147-residue chain is Transthyretin (147 aa).

Residues 1–20 (MASLRLFLLCLAGLVFVSEA) form the signal peptide. Cysteine 30 carries the sulfocysteine modification. An L-thyroxine-binding site is contributed by lysine 35. The residue at position 62 (glutamate 62) is a 4-carboxyglutamate. Phosphoserine is present on serine 72. Glutamate 74 is a binding site for L-thyroxine. Residue asparagine 118 is glycosylated (N-linked (GlcNAc...) asparagine). Position 137 (serine 137) interacts with L-thyroxine.

The protein belongs to the transthyretin family. Homotetramer. Dimer of dimers. In the homotetramer, subunits assemble around a central channel that can accommodate two ligand molecules. Interacts with RBP4. Sulfonation of the reactive cysteine Cys-30 enhances the stability of the native conformation of TTR, avoiding misassembly of the protein leading to amyloid formation. As to expression, detected in plasma (at protein level). Detected in liver.

It localises to the secreted. Thyroid hormone-binding protein. Probably transports thyroxine from the bloodstream to the brain. In Mus musculus (Mouse), this protein is Transthyretin (Ttr).